Here is a 372-residue protein sequence, read N- to C-terminus: ATP phosphoribosyltransferase regulatory subunit (372 aa).

This sequence belongs to the class-II aminoacyl-tRNA synthetase family. HisZ subfamily. In terms of assembly, heteromultimer composed of HisG and HisZ subunits.

It is found in the cytoplasm. Its pathway is amino-acid biosynthesis; L-histidine biosynthesis; L-histidine from 5-phospho-alpha-D-ribose 1-diphosphate: step 1/9. Its function is as follows. Required for the first step of histidine biosynthesis. May allow the feedback regulation of ATP phosphoribosyltransferase activity by histidine. The polypeptide is ATP phosphoribosyltransferase regulatory subunit (Rhizobium rhizogenes (strain K84 / ATCC BAA-868) (Agrobacterium radiobacter)).